The sequence spans 465 residues: ATP synthase subunit beta (465 aa).

Position 155-162 (155-162 (GGAGVGKT)) interacts with ATP.

It belongs to the ATPase alpha/beta chains family. In terms of assembly, F-type ATPases have 2 components, CF(1) - the catalytic core - and CF(0) - the membrane proton channel. CF(1) has five subunits: alpha(3), beta(3), gamma(1), delta(1), epsilon(1). CF(0) has three main subunits: a(1), b(2) and c(9-12). The alpha and beta chains form an alternating ring which encloses part of the gamma chain. CF(1) is attached to CF(0) by a central stalk formed by the gamma and epsilon chains, while a peripheral stalk is formed by the delta and b chains.

Its subcellular location is the cell membrane. The enzyme catalyses ATP + H2O + 4 H(+)(in) = ADP + phosphate + 5 H(+)(out). In terms of biological role, produces ATP from ADP in the presence of a proton gradient across the membrane. The catalytic sites are hosted primarily by the beta subunits. The chain is ATP synthase subunit beta from Buchnera aphidicola subsp. Acyrthosiphon pisum (strain 5A).